Here is a 339-residue protein sequence, read N- to C-terminus: Pleckstrin homology domain protein opy1 (339 aa).

Residues 25–119 (RVLKSGWLIK…WVHVLRSTTG (95 aa)) enclose the PH 1 domain. Polar residues predominate over residues 141 to 167 (ESEPNVQISDTDFDNISTEPRNQTTSP). The interval 141-170 (ESEPNVQISDTDFDNISTEPRNQTTSPLDL) is disordered. Residues 233–330 (KVLMQGTIHW…WVAALKTSID (98 aa)) form the PH 2 domain.

As to quaternary structure, interacts (via domain PH 1) with phosphatidylinositol 4-phosphate 5-kinase its3; the interaction is direct but opy1 does not appear to regulate its3 localization or function.

The protein resides in the cell tip. Its subcellular location is the cell membrane. Functionally, binds phosphatidylinositol 4,5-bisphosphate (PtdIns(4,5)P2/PIP2) at the cell membrane. The chain is Pleckstrin homology domain protein opy1 from Schizosaccharomyces pombe (strain 972 / ATCC 24843) (Fission yeast).